The chain runs to 332 residues: Polyprenyl transferase yanG (332 aa).

8 helical membrane passes run 42–62, 72–92, 145–165, 170–190, 200–220, 242–262, 266–286, and 300–320; these read IWGA…LAFA, VTAT…FFVV, PAVT…PFMK, FPQV…WVGV, ALPL…FYAT, VKIL…MTAL, LSLI…PWHV, and VFKA…LELV.

This sequence belongs to the UbiA prenyltransferase family. The cofactor is Mg(2+).

The protein localises to the membrane. The protein operates within secondary metabolite biosynthesis; terpenoid biosynthesis. In terms of biological role, polyprenyl transferase; part of the gene cluster that mediates the biosynthesis of yanuthone D, a fungal isoprenoid epoxycyclohexenone that acts as an antibiotic against fungi and bacteria. The first step of the pathway is the synthesis of 6-methylsalicylic acid (6-MSA) by the polyketide synthase yanA. 6-MSA is then converted to m-cresol by the decarboxylase yanB. The cytochrome P450 monooxygenase yanC then catalyzes the oxidation of m-cresol to toluquinol. Epoxidation of toluquinol is then performed by the short chain dehydrogenase yanD, with the help of yanE, and a further prenylation by yanG leads to 7-deacetoxyyanuthone A. The next step is the hydroxylation of C-22 of 7-deacetoxyyanuthone A by the cytochrome P450 monooxygenase yanH to yield 22-deacetylyanuthone A. O-Mevalon transferase yanI then attaches mevalon to the hydroxyl group of 22-deacetylyanuthone A to produce yanuthone E. Finally, the FAD-dependent monooxygenase yanF oxidizes the hydroxyl group at C15 of yanuthone E to form yanuthone D. Furthermore, several branching points in the pathway lead to the production of yanuthones F and G from 7-deacetoxyyanuthone A; yanuthones H and I from 22-deacetylyanuthone A; and yanuthone J from yanuthone E. YanG is also involved in the synthesis of yanuthone X1 which does not have 6-methylsalicylic acid (6-MSA) as precursor. In Aspergillus niger (strain ATCC 1015 / CBS 113.46 / FGSC A1144 / LSHB Ac4 / NCTC 3858a / NRRL 328 / USDA 3528.7), this protein is Polyprenyl transferase yanG.